A 148-amino-acid chain; its full sequence is Large ribosomal subunit protein bL9 (148 aa).

This sequence belongs to the bacterial ribosomal protein bL9 family.

Functionally, binds to the 23S rRNA. The sequence is that of Large ribosomal subunit protein bL9 from Acetivibrio thermocellus (strain ATCC 27405 / DSM 1237 / JCM 9322 / NBRC 103400 / NCIMB 10682 / NRRL B-4536 / VPI 7372) (Clostridium thermocellum).